Reading from the N-terminus, the 163-residue chain is Nucleotide-binding protein YPDSF_2805 (163 aa).

The protein belongs to the YajQ family.

In terms of biological role, nucleotide-binding protein. The sequence is that of Nucleotide-binding protein YPDSF_2805 from Yersinia pestis (strain Pestoides F).